The chain runs to 155 residues: RNA pyrophosphohydrolase (155 aa).

One can recognise a Nudix hydrolase domain in the interval 5-147 (RYRPNVAAIV…KRPVYKKVLE (143 aa)). The short motif at 42-63 (GGIDKGESPKEALLRELKEEIG) is the Nudix box element.

This sequence belongs to the Nudix hydrolase family. RppH subfamily. A divalent metal cation serves as cofactor.

Functionally, accelerates the degradation of transcripts by removing pyrophosphate from the 5'-end of triphosphorylated RNA, leading to a more labile monophosphorylated state that can stimulate subsequent ribonuclease cleavage. The chain is RNA pyrophosphohydrolase from Nitratiruptor sp. (strain SB155-2).